The following is a 176-amino-acid chain: Urease accessory protein UreE (176 aa).

It belongs to the UreE family.

It localises to the cytoplasm. Involved in urease metallocenter assembly. Binds nickel. Probably functions as a nickel donor during metallocenter assembly. The protein is Urease accessory protein UreE of Helicobacter bizzozeronii.